Consider the following 333-residue polypeptide: Phosphate acyltransferase (333 aa).

Belongs to the PlsX family. In terms of assembly, homodimer. Probably interacts with PlsY.

Its subcellular location is the cytoplasm. The catalysed reaction is a fatty acyl-[ACP] + phosphate = an acyl phosphate + holo-[ACP]. It functions in the pathway lipid metabolism; phospholipid metabolism. Catalyzes the reversible formation of acyl-phosphate (acyl-PO(4)) from acyl-[acyl-carrier-protein] (acyl-ACP). This enzyme utilizes acyl-ACP as fatty acyl donor, but not acyl-CoA. The sequence is that of Phosphate acyltransferase from Ligilactobacillus salivarius (strain UCC118) (Lactobacillus salivarius).